A 696-amino-acid polypeptide reads, in one-letter code: Ribonucleoside-diphosphate reductase subunit beta (696 aa).

Fe cation-binding residues include aspartate 97, glutamate 127, and histidine 130. Residue tyrosine 134 is part of the active site. Fe cation is bound by residues glutamate 194 and glutamate 228. The region spanning aspartate 377–glycine 507 is the DOD-type homing endonuclease domain. Fe cation is bound at residue histidine 577.

This sequence belongs to the ribonucleoside diphosphate reductase small chain family. In terms of assembly, tetramer of two alpha and two beta subunits. Fe cation serves as cofactor. Post-translationally, this protein undergoes a protein self splicing that involves a post-translational excision of the intervening region (intein) followed by peptide ligation.

The enzyme catalyses a 2'-deoxyribonucleoside 5'-diphosphate + [thioredoxin]-disulfide + H2O = a ribonucleoside 5'-diphosphate + [thioredoxin]-dithiol. Its function is as follows. Provides the precursors necessary for DNA synthesis. Catalyzes the biosynthesis of deoxyribonucleotides from the corresponding ribonucleotides. In Aquifex aeolicus (strain VF5), this protein is Ribonucleoside-diphosphate reductase subunit beta (nrdB).